The chain runs to 330 residues: uncharacterized protein (330 aa).

The region spanning 96–256 (AALEFDFTDL…LMLAALRKKL (161 aa)) is the JmjC domain. The Fe cation site is built by histidine 145, aspartate 147, and histidine 224.

It belongs to the ROX family. It depends on Fe(2+) as a cofactor.

This is an uncharacterized protein from Bacillus subtilis (strain 168).